Reading from the N-terminus, the 400-residue chain is MMKVKELPKKFGKFGGQFVPETLMNALIELERQFIQTKEDDEFQEMYRYYVREYSGRPTPLYYAENLTKKLGGGKIYLKREDLNHTGAHKINNVIGQVLLARKMKKKRIIAETGAGQHGVATATICAMFDLECVVYMGAEDIERQALNVFKMEMLGAEVVSVTSGTATLKDATNEAIRDWVANVKDTYYVIGSVVGPHPYPTMVRDFQRIIGDEVKEQILEKEGRLPNYLVACVGGGSNAMGLFYPFYEDEAVALYGVEAAGLGVETDQHAATITKGSMGVIHGMMTYLLQDEQGQITPVHSISAGLDYPGIGPEHAYYHHTGRANYVAITDEEALEAFQLLTRLEGIIPALESAHAIAYLMKLAPKTKGDDIIVLNLSGRGDKDIHTISKLLGGNRDDK.

Lysine 90 carries the N6-(pyridoxal phosphate)lysine modification.

The protein belongs to the TrpB family. As to quaternary structure, tetramer of two alpha and two beta chains. Requires pyridoxal 5'-phosphate as cofactor.

It carries out the reaction (1S,2R)-1-C-(indol-3-yl)glycerol 3-phosphate + L-serine = D-glyceraldehyde 3-phosphate + L-tryptophan + H2O. It participates in amino-acid biosynthesis; L-tryptophan biosynthesis; L-tryptophan from chorismate: step 5/5. In terms of biological role, the beta subunit is responsible for the synthesis of L-tryptophan from indole and L-serine. This chain is Tryptophan synthase beta chain, found in Alkaliphilus metalliredigens (strain QYMF).